We begin with the raw amino-acid sequence, 238 residues long: UPF0328 protein ECU07_0010 (238 aa).

Disordered regions lie at residues Met1–Arg154 and Gly211–Leu238. Residues His106 to Ser128 show a composition bias toward basic and acidic residues. The span at Pro129–Thr152 shows a compositional bias: polar residues.

This sequence belongs to the UPF0328 family.

The sequence is that of UPF0328 protein ECU07_0010 from Encephalitozoon cuniculi (strain GB-M1) (Microsporidian parasite).